A 134-amino-acid polypeptide reads, in one-letter code: Alkaline proteinase inhibitor (134 aa).

The signal sequence occupies residues 1–26 (MVFAAWYLKFAFFVALAFSIIGGSMA). Cys50 and Cys73 are disulfide-bonded.

The protein belongs to the protease inhibitor I38 family.

The protein resides in the periplasm. Functionally, inhibitor of the alkaline protease. The polypeptide is Alkaline proteinase inhibitor (inh) (Photorhabdus luminescens (Xenorhabdus luminescens)).